A 439-amino-acid chain; its full sequence is 3-phosphoshikimate 1-carboxyvinyltransferase (439 aa).

Positions 31, 32, and 36 each coordinate 3-phosphoshikimate. Residue Lys31 coordinates phosphoenolpyruvate. Positions 103 and 131 each coordinate phosphoenolpyruvate. Ser175, Gln177, Asp322, and Lys349 together coordinate 3-phosphoshikimate. Gln177 lines the phosphoenolpyruvate pocket. Asp322 functions as the Proton acceptor in the catalytic mechanism. Residues Arg353 and Arg397 each coordinate phosphoenolpyruvate.

It belongs to the EPSP synthase family. Monomer.

The protein resides in the cytoplasm. It catalyses the reaction 3-phosphoshikimate + phosphoenolpyruvate = 5-O-(1-carboxyvinyl)-3-phosphoshikimate + phosphate. Its pathway is metabolic intermediate biosynthesis; chorismate biosynthesis; chorismate from D-erythrose 4-phosphate and phosphoenolpyruvate: step 6/7. Catalyzes the transfer of the enolpyruvyl moiety of phosphoenolpyruvate (PEP) to the 5-hydroxyl of shikimate-3-phosphate (S3P) to produce enolpyruvyl shikimate-3-phosphate and inorganic phosphate. In Clostridium tetani (strain Massachusetts / E88), this protein is 3-phosphoshikimate 1-carboxyvinyltransferase.